The primary structure comprises 491 residues: Cytochrome P450 monooxygenase olcB (491 aa).

The helical transmembrane segment at 5–27 threads the bilayer; it reads LLLSLSVCLLYVFITAFWNLYIH. C435 lines the heme pocket.

This sequence belongs to the cytochrome P450 family. Requires heme as cofactor.

It localises to the membrane. It functions in the pathway secondary metabolite biosynthesis; terpenoid biosynthesis. In terms of biological role, cytochrome P450 monooxygenase; part of the gene cluster that mediates the biosynthesis of 15-deoxyoxalicine B. The first step of the pathway is the synthesis of nicotinyl-CoA from nicotinic acid by the nicotinic acid-CoA ligase olcI. Nicotinyl-CoA is then a substrate of polyketide synthase olcA to produce 4-hydroxy-6-(3-pyridinyl)-2H-pyran-2-one (HPPO) which is further prenylated by the polyprenyl transferase olcH to yield geranylgeranyl-HPPO. Geranylgeranyl pyrophosphate is provided by the cluster-specific geranylgeranyl pyrophosphate synthase olcC. The FAD-dependent monooxygenase olcE catalyzes the epoxidation of geranylgeranyl-HPPO and the terpene cyclase olcD catalyzes the cyclization of the terpenoid component, resulting in the formation of the tricyclic terpene moiety seen in predecaturin E. The cytochrome P450 monooxygenase then catalyzes the allylic oxidation of predecaturin E, which is followed by spirocylization with concomitant loss of one molecule of water to form decaturin E. Decaturin E is the substrate of the cytochrome P450 monooxygenase olcJ which hydroxylates it at the C-29 position to form decaturin F. The short-chain dehydrogenase/reductase olcF may catalyze the oxidation of decaturin F to generate the 29-hydroxyl-27-one intermediate, and subsequent hemiacetal formation probably leads to the formation of decaturin C. The dioxygenase olcK may be a peroxisomal enzyme that catalyzes the hydroxylation of decaturin C into decaturin A once decaturin C is shuttled into the peroxisome by the MFS transporter olcL. Finally the cytochrome P450 monooxygenase olcB catalyzes the oxidative rearrangement to yield 15-deoxyoxalicine B. In the absence of olcJ, decaturin E may be shunted to a pathway in which it is oxidized to a ketone, possibly by olcF, to form decaturin D, which undergoes further allylic oxidation to yield decaturin G. Moreover, in the absence of oclK or oclL, oclB can convert decaturin C into 15-deoxyoxalicine A. The sequence is that of Cytochrome P450 monooxygenase olcB from Penicillium canescens.